The following is a 217-amino-acid chain: Somatotropin (217 aa).

A signal peptide spans 1–27; that stretch reads MMAAGPRASLLLAFALLCLPWTQEVGA. Histidine 46 provides a ligand contact to Zn(2+). A disulfide bond links cysteine 79 and cysteine 190. Serine 132 carries the post-translational modification Phosphoserine. Glutamate 199 is a Zn(2+) binding site. A disulfide bridge connects residues cysteine 207 and cysteine 215.

It belongs to the somatotropin/prolactin family.

The protein resides in the secreted. Its function is as follows. Plays an important role in growth control. Its major role in stimulating body growth is to stimulate the liver and other tissues to secrete IGF1. It stimulates both the differentiation and proliferation of myoblasts. It also stimulates amino acid uptake and protein synthesis in muscle and other tissues. In Cervus elaphus (Red deer), this protein is Somatotropin (GH1).